Consider the following 188-residue polypeptide: Protein GrpE (188 aa).

Positions 1-10 (MPDPTQNPNV) are enriched in polar residues. A disordered region spans residues 1–35 (MPDPTQNPNVTPELEQHAAPEAAAEAAPESSADVM). Over residues 19–32 (APEAAAEAAPESSA) the composition is skewed to low complexity.

Belongs to the GrpE family. In terms of assembly, homodimer.

The protein resides in the cytoplasm. Functionally, participates actively in the response to hyperosmotic and heat shock by preventing the aggregation of stress-denatured proteins, in association with DnaK and GrpE. It is the nucleotide exchange factor for DnaK and may function as a thermosensor. Unfolded proteins bind initially to DnaJ; upon interaction with the DnaJ-bound protein, DnaK hydrolyzes its bound ATP, resulting in the formation of a stable complex. GrpE releases ADP from DnaK; ATP binding to DnaK triggers the release of the substrate protein, thus completing the reaction cycle. Several rounds of ATP-dependent interactions between DnaJ, DnaK and GrpE are required for fully efficient folding. This chain is Protein GrpE, found in Azoarcus sp. (strain BH72).